The following is a 451-amino-acid chain: F-box/LRR-repeat protein 13 (451 aa).

The F-box domain occupies 17 to 70; sequence VDWISKLPDCLLCEVLLNLPTKDVVKTSVLSRRWRNLWKHVPGLDLDNTDFQEF. LRR repeat units follow at residues 128–155, 177–202, 224–251, and 335–363; these read DDSYGSWEVQLPSSIYTCESLVSLKLCG, TKFADDMGLETLITKCPVLESLTIER, VADSDEGVVEDLVVSIDAPKLEYLRLSD, and CVEFYGYMWEMLPIFLESCPNLKTLVVKS. The 52-residue stretch at 370-421 folds into the FBD domain; the sequence is GENIILPGPRRFLSSLEYVKIERPLKGEAMEMKLVSYLLENSTILKKLTLCL.

This chain is F-box/LRR-repeat protein 13 (FBL13), found in Arabidopsis thaliana (Mouse-ear cress).